The chain runs to 207 residues: 8-oxoguanine DNA glycosylase/AP lyase (207 aa).

Residues Lys129 and Asp147 contribute to the active site.

It belongs to the type-2 OGG1 family.

It carries out the reaction 2'-deoxyribonucleotide-(2'-deoxyribose 5'-phosphate)-2'-deoxyribonucleotide-DNA = a 3'-end 2'-deoxyribonucleotide-(2,3-dehydro-2,3-deoxyribose 5'-phosphate)-DNA + a 5'-end 5'-phospho-2'-deoxyribonucleoside-DNA + H(+). Its function is as follows. Catalyzes the excision of an oxidatively damaged form of guanine (7,8-dihydro-8-oxoguanine = 8-oxoG) from DNA. Also cleaves the DNA backbone at apurinic/apyrimidinic sites (AP sites). This is 8-oxoguanine DNA glycosylase/AP lyase from Thermotoga sp. (strain RQ2).